We begin with the raw amino-acid sequence, 152 residues long: Small ribosomal subunit protein uS13 (152 aa).

The protein belongs to the universal ribosomal protein uS13 family.

It is found in the cytoplasm. Functionally, located at the top of the head of the 40S subunit, it contacts several helices of the 18S rRNA. This chain is Small ribosomal subunit protein uS13 (RPS18), found in Argopecten irradians (Bay scallop).